The primary structure comprises 156 residues: UPF0262 protein Jann_2882 (156 aa).

The protein belongs to the UPF0262 family.

This chain is UPF0262 protein Jann_2882, found in Jannaschia sp. (strain CCS1).